The primary structure comprises 381 residues: tRNA pseudouridine synthase Pus10 (381 aa).

The active-site Nucleophile is the aspartate 226.

The protein belongs to the pseudouridine synthase Pus10 family.

The enzyme catalyses uridine(54) in tRNA = pseudouridine(54) in tRNA. The catalysed reaction is uridine(55) in tRNA = pseudouridine(55) in tRNA. Responsible for synthesis of pseudouridine from uracil-54 and uracil-55 in the psi GC loop of transfer RNAs. The chain is tRNA pseudouridine synthase Pus10 from Nitrosopumilus maritimus (strain SCM1).